The following is a 107-amino-acid chain: UPF0145 protein YbjQ (107 aa).

The protein belongs to the UPF0145 family.

This Salmonella gallinarum (strain 287/91 / NCTC 13346) protein is UPF0145 protein YbjQ.